The sequence spans 599 residues: uncharacterized protein (599 aa).

This is an uncharacterized protein from Acanthamoeba polyphaga (Amoeba).